A 690-amino-acid chain; its full sequence is DNA ligase (690 aa).

NAD(+) contacts are provided by residues D36–D40, S85–L86, and E124. K126 functions as the N6-AMP-lysine intermediate in the catalytic mechanism. 4 residues coordinate NAD(+): R147, E184, K308, and K332. 4 residues coordinate Zn(2+): C426, C429, C444, and C449. A BRCT domain is found at N614 to L690.

The protein belongs to the NAD-dependent DNA ligase family. LigA subfamily. It depends on Mg(2+) as a cofactor. Requires Mn(2+) as cofactor.

The catalysed reaction is NAD(+) + (deoxyribonucleotide)n-3'-hydroxyl + 5'-phospho-(deoxyribonucleotide)m = (deoxyribonucleotide)n+m + AMP + beta-nicotinamide D-nucleotide.. DNA ligase that catalyzes the formation of phosphodiester linkages between 5'-phosphoryl and 3'-hydroxyl groups in double-stranded DNA using NAD as a coenzyme and as the energy source for the reaction. It is essential for DNA replication and repair of damaged DNA. The protein is DNA ligase of Prochlorococcus marinus (strain NATL1A).